A 155-amino-acid chain; its full sequence is uncharacterized protein (155 aa).

This is an uncharacterized protein from Rickettsia prowazekii (strain Madrid E).